Consider the following 433-residue polypeptide: 28S rRNA (cytosine-C(5))-methyltransferase (433 aa).

Residues 235 to 241 (CAAPGMK), E259, D286, and D304 each bind S-adenosyl-L-methionine. The active-site Nucleophile is the C357.

The protein belongs to the class I-like SAM-binding methyltransferase superfamily. RsmB/NOP family.

It carries out the reaction a cytidine in 28S rRNA + S-adenosyl-L-methionine = a 5-methylcytidine in 28S rRNA + S-adenosyl-L-homocysteine + H(+). Functionally, S-adenosyl-L-methionine-dependent methyltransferase that specifically methylates the C(5) position of a cytosine in 28S rRNA. In Drosophila melanogaster (Fruit fly), this protein is 28S rRNA (cytosine-C(5))-methyltransferase.